Here is a 216-residue protein sequence, read N- to C-terminus: Protein-L-isoaspartate O-methyltransferase (216 aa).

The active site involves S66.

Belongs to the methyltransferase superfamily. L-isoaspartyl/D-aspartyl protein methyltransferase family.

It localises to the cytoplasm. The catalysed reaction is [protein]-L-isoaspartate + S-adenosyl-L-methionine = [protein]-L-isoaspartate alpha-methyl ester + S-adenosyl-L-homocysteine. Catalyzes the methyl esterification of L-isoaspartyl residues in peptides and proteins that result from spontaneous decomposition of normal L-aspartyl and L-asparaginyl residues. It plays a role in the repair and/or degradation of damaged proteins. The chain is Protein-L-isoaspartate O-methyltransferase from Dechloromonas aromatica (strain RCB).